We begin with the raw amino-acid sequence, 134 residues long: Large ribosomal subunit protein uL22 (134 aa).

This sequence belongs to the universal ribosomal protein uL22 family. As to quaternary structure, part of the 50S ribosomal subunit. Contacts protein L32.

Its function is as follows. This protein binds specifically to 23S rRNA; its binding is stimulated by other ribosomal proteins, e.g. L4, L17, and L20. It is important during the early stages of 50S assembly. It makes multiple contacts with different domains of the 23S rRNA in the assembled 50S subunit and ribosome. The globular domain of the protein is located by the polypeptide exit tunnel on the outside of the subunit while an extended beta-hairpin forms part of the wall of the tunnel. Forms a pair of 'tweezers' with L32 that hold together two different domains of the 23S rRNA. Interacts with the tunnel-blocking modified macrolide azithromycin. Upon binding of the macrolide troleadomycin to the ribosome, the tip of the beta-hairpin is displaced, which severely restricts the tunnel. This and experiments in E.coli have led to the suggestion that it is part of the gating mechanism involved in translation arrest in the absence of the protein export system. In Deinococcus radiodurans (strain ATCC 13939 / DSM 20539 / JCM 16871 / CCUG 27074 / LMG 4051 / NBRC 15346 / NCIMB 9279 / VKM B-1422 / R1), this protein is Large ribosomal subunit protein uL22 (rplV).